An 88-amino-acid chain; its full sequence is Small ribosomal subunit protein bS16c (88 aa).

The protein belongs to the bacterial ribosomal protein bS16 family.

It is found in the plastid. Its subcellular location is the chloroplast. This is Small ribosomal subunit protein bS16c from Solanum bulbocastanum (Wild potato).